The primary structure comprises 228 residues: 2-C-methyl-D-erythritol 4-phosphate cytidylyltransferase (228 aa).

The protein belongs to the IspD/TarI cytidylyltransferase family. IspD subfamily.

The enzyme catalyses 2-C-methyl-D-erythritol 4-phosphate + CTP + H(+) = 4-CDP-2-C-methyl-D-erythritol + diphosphate. The protein operates within isoprenoid biosynthesis; isopentenyl diphosphate biosynthesis via DXP pathway; isopentenyl diphosphate from 1-deoxy-D-xylulose 5-phosphate: step 2/6. Functionally, catalyzes the formation of 4-diphosphocytidyl-2-C-methyl-D-erythritol from CTP and 2-C-methyl-D-erythritol 4-phosphate (MEP). The polypeptide is 2-C-methyl-D-erythritol 4-phosphate cytidylyltransferase (Actinobacillus pleuropneumoniae serotype 3 (strain JL03)).